Reading from the N-terminus, the 28-residue chain is U1-poneritoxin-Da4a (28 aa).

A28 bears the Alanine amide mark.

Expressed by the venom gland.

The protein resides in the secreted. In terms of biological role, shows a broad spectrum of activity against both Gram-positive and Gram-negative bacteria. Also has antimicrobial activity against S.cerevisiae. Has insecticidal and non-hemolytic activity. The polypeptide is U1-poneritoxin-Da4a (Dinoponera australis (Giant neotropical hunting ant)).